The following is a 201-amino-acid chain: Large ribosomal subunit protein uL4 (201 aa).

The disordered stretch occupies residues 45 to 71 (AQKTRAEVTGSGKKPWRQKGTGRARAG).

It belongs to the universal ribosomal protein uL4 family. In terms of assembly, part of the 50S ribosomal subunit.

One of the primary rRNA binding proteins, this protein initially binds near the 5'-end of the 23S rRNA. It is important during the early stages of 50S assembly. It makes multiple contacts with different domains of the 23S rRNA in the assembled 50S subunit and ribosome. Functionally, forms part of the polypeptide exit tunnel. In Shewanella pealeana (strain ATCC 700345 / ANG-SQ1), this protein is Large ribosomal subunit protein uL4.